Reading from the N-terminus, the 223-residue chain is Small ribosomal subunit protein uS3 (223 aa).

In terms of domain architecture, KH type-2 spans 38–106; that stretch reads LKAELKEKLK…EVYIDIQEVH (69 aa).

The protein belongs to the universal ribosomal protein uS3 family. Part of the 30S ribosomal subunit. Forms a tight complex with proteins S10 and S14.

Its function is as follows. Binds the lower part of the 30S subunit head. Binds mRNA in the 70S ribosome, positioning it for translation. The sequence is that of Small ribosomal subunit protein uS3 from Koribacter versatilis (strain Ellin345).